The sequence spans 201 residues: Imidazoleglycerol-phosphate dehydratase (201 aa).

The protein belongs to the imidazoleglycerol-phosphate dehydratase family.

The protein localises to the cytoplasm. It carries out the reaction D-erythro-1-(imidazol-4-yl)glycerol 3-phosphate = 3-(imidazol-4-yl)-2-oxopropyl phosphate + H2O. It functions in the pathway amino-acid biosynthesis; L-histidine biosynthesis; L-histidine from 5-phospho-alpha-D-ribose 1-diphosphate: step 6/9. In Prochlorococcus marinus (strain MIT 9301), this protein is Imidazoleglycerol-phosphate dehydratase.